Here is a 270-residue protein sequence, read N- to C-terminus: Putative phosphoenolpyruvate synthase regulatory protein (270 aa).

149 to 156 (GVSRSGKT) contributes to the ADP binding site.

The protein belongs to the pyruvate, phosphate/water dikinase regulatory protein family. PSRP subfamily.

It carries out the reaction [pyruvate, water dikinase] + ADP = [pyruvate, water dikinase]-phosphate + AMP + H(+). It catalyses the reaction [pyruvate, water dikinase]-phosphate + phosphate + H(+) = [pyruvate, water dikinase] + diphosphate. Bifunctional serine/threonine kinase and phosphorylase involved in the regulation of the phosphoenolpyruvate synthase (PEPS) by catalyzing its phosphorylation/dephosphorylation. The chain is Putative phosphoenolpyruvate synthase regulatory protein from Pseudoalteromonas atlantica (strain T6c / ATCC BAA-1087).